The sequence spans 184 residues: ATP synthase subunit b, chloroplastic (184 aa).

The chain crosses the membrane as a helical span at residues 27–49; the sequence is LATNPINLSVVFGVLIFFGKGVL.

It belongs to the ATPase B chain family. In terms of assembly, F-type ATPases have 2 components, F(1) - the catalytic core - and F(0) - the membrane proton channel. F(1) has five subunits: alpha(3), beta(3), gamma(1), delta(1), epsilon(1). F(0) has four main subunits: a(1), b(1), b'(1) and c(10-14). The alpha and beta chains form an alternating ring which encloses part of the gamma chain. F(1) is attached to F(0) by a central stalk formed by the gamma and epsilon chains, while a peripheral stalk is formed by the delta, b and b' chains.

It is found in the plastid. Its subcellular location is the chloroplast thylakoid membrane. In terms of biological role, f(1)F(0) ATP synthase produces ATP from ADP in the presence of a proton or sodium gradient. F-type ATPases consist of two structural domains, F(1) containing the extramembraneous catalytic core and F(0) containing the membrane proton channel, linked together by a central stalk and a peripheral stalk. During catalysis, ATP synthesis in the catalytic domain of F(1) is coupled via a rotary mechanism of the central stalk subunits to proton translocation. Its function is as follows. Component of the F(0) channel, it forms part of the peripheral stalk, linking F(1) to F(0). This is ATP synthase subunit b, chloroplastic from Draba nemorosa (Woodland whitlowgrass).